The following is a 172-amino-acid chain: 3-hydroxydecanoyl-[acyl-carrier-protein] dehydratase (172 aa).

H71 is a catalytic residue.

It belongs to the thioester dehydratase family. FabA subfamily. In terms of assembly, homodimer.

The protein localises to the cytoplasm. The enzyme catalyses a (3R)-hydroxyacyl-[ACP] = a (2E)-enoyl-[ACP] + H2O. It catalyses the reaction (3R)-hydroxydecanoyl-[ACP] = (2E)-decenoyl-[ACP] + H2O. The catalysed reaction is (2E)-decenoyl-[ACP] = (3Z)-decenoyl-[ACP]. It functions in the pathway lipid metabolism; fatty acid biosynthesis. Functionally, necessary for the introduction of cis unsaturation into fatty acids. Catalyzes the dehydration of (3R)-3-hydroxydecanoyl-ACP to E-(2)-decenoyl-ACP and then its isomerization to Z-(3)-decenoyl-ACP. Can catalyze the dehydratase reaction for beta-hydroxyacyl-ACPs with saturated chain lengths up to 16:0, being most active on intermediate chain length. The protein is 3-hydroxydecanoyl-[acyl-carrier-protein] dehydratase of Pseudoalteromonas atlantica (strain T6c / ATCC BAA-1087).